A 1066-amino-acid polypeptide reads, in one-letter code: Coiled-coil domain-containing protein 73 (1066 aa).

Coiled coils occupy residues 47-134 (KAET…QVSQ) and 178-391 (LVRE…KTEE). Disordered stretches follow at residues 568-600 (LDTRSNKASSNGMSNEMAHKRNYNTDGSESNPF), 719-811 (SENS…PKSG), 854-883 (LSPATPSADSVSTSARSAFDLPSPDKPEKT), 944-978 (KNIESDPTSNSRAADTMSNWSIHLDPKGQPREERN), and 1003-1027 (VQQSHSQTVKVTDSPDPLTFSPGNN). Polar residues-rich tracts occupy residues 591–600 (NTDGSESNPF), 742–781 (RTNTNDIQNSSLRNHLGASESSVSVSDFQVNQGDSHTSQA), 789–811 (PLTTSSEKQPPSESQITETPKSG), 857–869 (ATPSADSVSTSAR), and 948–964 (SDPTSNSRAADTMSNWS). Basic and acidic residues predominate over residues 967 to 978 (LDPKGQPREERN). Residues 1003 to 1013 (VQQSHSQTVKV) are compositionally biased toward polar residues.

In Mus musculus (Mouse), this protein is Coiled-coil domain-containing protein 73 (Ccdc73).